The primary structure comprises 97 residues: Large ribosomal subunit protein bL27 (97 aa).

A propeptide spanning residues 1-12 (MLKMNLANLQLF) is cleaved from the precursor. The segment at 14–38 (HKKGGGSTSNGRDSESKRLGAKAAD) is disordered.

Belongs to the bacterial ribosomal protein bL27 family. Post-translationally, the N-terminus is cleaved by ribosomal processing cysteine protease Prp.

This Streptococcus mutans serotype c (strain ATCC 700610 / UA159) protein is Large ribosomal subunit protein bL27.